The following is a 190-amino-acid chain: Glycerol-3-phosphate acyltransferase 2 (190 aa).

The next 5 membrane-spanning stretches (helical) occupy residues 1 to 21 (MNIL…ALIV), 53 to 73 (VIVA…PLIL), 76 to 96 (TINP…SVFA), 110 to 130 (VFLF…VLTL), and 152 to 172 (LIFE…SIII).

The protein belongs to the PlsY family. As to quaternary structure, probably interacts with PlsX.

Its subcellular location is the cell membrane. The catalysed reaction is an acyl phosphate + sn-glycerol 3-phosphate = a 1-acyl-sn-glycero-3-phosphate + phosphate. Its pathway is lipid metabolism; phospholipid metabolism. Its function is as follows. Catalyzes the transfer of an acyl group from acyl-phosphate (acyl-PO(4)) to glycerol-3-phosphate (G3P) to form lysophosphatidic acid (LPA). This enzyme utilizes acyl-phosphate as fatty acyl donor, but not acyl-CoA or acyl-ACP. The sequence is that of Glycerol-3-phosphate acyltransferase 2 from Bacillus anthracis.